A 101-amino-acid chain; its full sequence is ATP synthase subunit c (101 aa).

Transmembrane regions (helical) follow at residues 31–51 (AFAYLGAGLAMIGVIGVGAGQ) and 81–101 (AISETSSIYALLVALILIFVG).

It belongs to the ATPase C chain family. In terms of assembly, F-type ATPases have 2 components, F(1) - the catalytic core - and F(0) - the membrane proton channel. F(1) has five subunits: alpha(3), beta(3), gamma(1), delta(1), epsilon(1). F(0) has three main subunits: a(1), b(2) and c(10-14). The alpha and beta chains form an alternating ring which encloses part of the gamma chain. F(1) is attached to F(0) by a central stalk formed by the gamma and epsilon chains, while a peripheral stalk is formed by the delta and b chains.

It is found in the cell membrane. Functionally, f(1)F(0) ATP synthase produces ATP from ADP in the presence of a proton or sodium gradient. F-type ATPases consist of two structural domains, F(1) containing the extramembraneous catalytic core and F(0) containing the membrane proton channel, linked together by a central stalk and a peripheral stalk. During catalysis, ATP synthesis in the catalytic domain of F(1) is coupled via a rotary mechanism of the central stalk subunits to proton translocation. In terms of biological role, key component of the F(0) channel; it plays a direct role in translocation across the membrane. A homomeric c-ring of between 10-14 subunits forms the central stalk rotor element with the F(1) delta and epsilon subunits. The sequence is that of ATP synthase subunit c from Mesomycoplasma hyopneumoniae (strain J / ATCC 25934 / NCTC 10110) (Mycoplasma hyopneumoniae).